A 225-amino-acid polypeptide reads, in one-letter code: Ribonuclease HII (225 aa).

In terms of domain architecture, RNase H type-2 spans 28-220 (DIIAGTDEVG…VKEYVDISQE (193 aa)). 3 residues coordinate a divalent metal cation: aspartate 34, glutamate 35, and aspartate 129.

Belongs to the RNase HII family. Requires Mn(2+) as cofactor. It depends on Mg(2+) as a cofactor.

It is found in the cytoplasm. It catalyses the reaction Endonucleolytic cleavage to 5'-phosphomonoester.. Functionally, endonuclease that specifically degrades the RNA of RNA-DNA hybrids. This Desulfotalea psychrophila (strain LSv54 / DSM 12343) protein is Ribonuclease HII.